The chain runs to 3414 residues: Genome polyprotein (3414 aa).

The disordered stretch occupies residues 1 to 27; sequence MAGKAVLKGKGGGPPRRASKVAPKKTR. Residues 1-98 are Cytoplasmic-facing; it reads MAGKAVLKGK…LHRRGSRRTT (98 aa). Positions 17–27 are enriched in basic residues; that stretch reads RASKVAPKKTR. Residues 97–117 constitute a propeptide, ER anchor for the capsid protein C, removed in mature form by serine protease NS3; the sequence is TTIDWMTPLLITVMLGMCLTA. The chain crosses the membrane as a helical span at residues 99–117; that stretch reads IDWMTPLLITVMLGMCLTA. Over 118–242 the chain is Extracellular; it reads TVRRERDGSM…HLTRVEGWVW (125 aa). Asparagine 144 carries an N-linked (GlcNAc...) asparagine; by host glycan. Residues 243–260 form a helical membrane-spanning segment; the sequence is KNKLFTLSLVMVAWLMVD. Glycine 261 is a topological domain (cytoplasmic). The helical transmembrane segment at 262–280 threads the bilayer; the sequence is LLPRILIVVVALALVPAYA. The Extracellular portion of the chain corresponds to 281-727; it reads SRCTHLENRD…HTVLGGAFNT (447 aa). Disulfide bonds link cysteine 283–cysteine 310, cysteine 340–cysteine 396, cysteine 340–cysteine 401, cysteine 354–cysteine 385, cysteine 372–cysteine 396, and cysteine 372–cysteine 401. The interval 378-391 is fusion peptide; that stretch reads DRGWGNHCGLFGKG. Asparagine 434 carries an N-linked (GlcNAc...) asparagine; by host glycan. 2 disulfide bridges follow: cysteine 466–cysteine 570 and cysteine 587–cysteine 618. A helical membrane pass occupies residues 728–748; sequence LLGGVGFLPKILLGVAMAWLG. Residues 749–755 lie on the Cytoplasmic side of the membrane; that stretch reads LNMRNPT. A helical membrane pass occupies residues 756-776; that stretch reads LSMGFLLSGGLVLAMTLGVGA. The Extracellular segment spans residues 777–1187; that stretch reads DVGCAVDTER…LVSVESLFRY (411 aa). 6 cysteine pairs are disulfide-bonded: cysteine 780/cysteine 791, cysteine 831/cysteine 920, cysteine 955/cysteine 1000, cysteine 1057/cysteine 1106, cysteine 1068/cysteine 1090, and cysteine 1089/cysteine 1093. Residues asparagine 861, asparagine 983, and asparagine 999 are each glycosylated (N-linked (GlcNAc...) asparagine; by host). Residues 1188 to 1208 form a helical membrane-spanning segment; sequence LVAVGLVFQLELGPEAVAMVL. At 1209–1232 the chain is on the cytoplasmic side; it reads LQAVFEMRTCLLSGFVLRRSITTR. Residues 1233 to 1253 form a helical membrane-spanning segment; it reads EIVTVYFLLLVLEMGIPVKGL. Residues 1254-1267 are Lumenal-facing; it reads EHLWRWTDALAMGA. A helical transmembrane segment spans residues 1268–1288; the sequence is IIFRACTAEGKTGIGLLLAAF. Topologically, residues 1289–1300 are cytoplasmic; sequence MTQSDMNIIHDG. Residues 1301–1319 form a helical membrane-spanning segment; it reads LTAFLCVATTMAIWRYIRG. Topologically, residues 1320–1325 are lumenal; it reads QGERKG. The helical transmembrane segment at 1326 to 1346 threads the bilayer; the sequence is LTWIVPLAGILGGEGSGVRLL. At 1347-1359 the chain is on the cytoplasmic side; sequence AFWELAASRGRRS. The chain crosses the membrane as a helical span at residues 1360 to 1378; sequence FNEPMTVIGVMLTLASGMM. The Lumenal portion of the chain corresponds to 1379–1382; it reads RHTS. The helical transmembrane segment at 1383–1403 threads the bilayer; the sequence is QEAVCAMALAAFLLLMLTLGT. Residues 1404–1454 are Cytoplasmic-facing; that stretch reads RKMQLLAEWSGNIEWNPELTSEGGEVSLRVRQDALGNLHLTELEKEERMMA. The segment at 1410-1449 is interacts with and activates NS3 protease; the sequence is AEWSGNIEWNPELTSEGGEVSLRVRQDALGNLHLTELEKE. Residues 1455 to 1475 constitute an intramembrane region (helical); sequence FWLVVGLIASAFHWSGILIVM. The Cytoplasmic portion of the chain corresponds to 1476 to 2160; the sequence is GLWTISEMLG…RIGERDAPEA (685 aa). The 180-residue stretch at 1490–1669 folds into the Peptidase S7 domain; sequence TDLVFSGCSE…EVEKSRPNLP (180 aa). Residues histidine 1543, aspartate 1567, and serine 1627 each act as charge relay system; for serine protease NS3 activity in the active site. Residues 1675–1831 form the Helicase ATP-binding domain; that stretch reads TGWTAKGQIT…ESNGAIASEE (157 aa). 1688–1695 serves as a coordination point for ATP; sequence MHPGSGKT. A DEAH box motif is present at residues 1779–1782; sequence DEAH. Residues 1841-2000 form the Helicase C-terminal domain; it reads DGFDWITEYE…TARGPVATFY (160 aa). Residue lysine 1883 is modified to N6-acetyllysine; by host. The chain crosses the membrane as a helical span at residues 2161–2181; it reads FLTAVEMLVLGLATLGVVWCF. Topologically, residues 2182–2189 are lumenal; that stretch reads VVRTSVSR. The helical intramembrane region spans 2190 to 2209; the sequence is MVLGTLVLATSLIFLWAGGV. Residue glycine 2210 is a topological domain, lumenal. Residues 2211–2231 traverse the membrane as a helical segment; sequence YGNMAGVALVFYTLLTVLQPE. The Cytoplasmic segment spans residues 2232–2238; it reads TGKQRSS. A helical membrane pass occupies residues 2239-2259; the sequence is DDNKLAYFLLTLCGLAGMVAA. Topologically, residues 2260 to 2296 are lumenal; the sequence is NEMGLLEKTKADLAALFARDQGETVRWGEWTNLDIQP. An intramembrane region (helical) is located at residues 2297–2315; that stretch reads ARSWGTYVLVVSLFTPYML. At 2316 to 2343 the chain is on the lumenal side; that stretch reads HQLQTRIQQLVNSAVASGAQAMRDLGGG. Positions 2344–2364 form an intramembrane region, helical; that stretch reads TPFFGVAGHVLALGVASLVGA. Residues 2365–2368 lie on the Lumenal side of the membrane; that stretch reads TPTS. Residues 2369 to 2389 traverse the membrane as a helical segment; the sequence is LILGVGLAAFHLAIVVSGLEA. The Cytoplasmic portion of the chain corresponds to 2390 to 2432; sequence ELTQRAHKVFFSAMVRNPMVDGDVINPFGDGEAKPALYERKLS. The helical transmembrane segment at 2433–2453 threads the bilayer; the sequence is LILALVLCLASVVMNRTFVAV. Over 2454-2477 the chain is Lumenal; it reads TEAGAVGVAAAMQLLRPEMDVLWT. Residues 2478 to 2498 form a helical membrane-spanning segment; sequence MPVACGMSGVVRGSLWGLLPL. Over 2499 to 3414 the chain is Cytoplasmic; the sequence is GHRLWLRTTG…WELKLESSIF (916 aa). One can recognise an mRNA cap 0-1 NS5-type MT domain in the interval 2512–2776; it reads GGSEGDTLGD…EIDLGVGTRS (265 aa). Residue serine 2567 participates in S-adenosyl-L-methionine binding. Serine 2567 is modified (phosphoserine). The For 2'-O-MTase activity role is filled by lysine 2572. 6 residues coordinate S-adenosyl-L-methionine: glycine 2597, tryptophan 2598, threonine 2615, isoleucine 2616, aspartate 2642, and valine 2643. The For 2'-O-MTase activity role is filled by aspartate 2657. Position 2658 (isoleucine 2658) interacts with S-adenosyl-L-methionine. Catalysis depends on for 2'-O-MTase activity residues lysine 2694 and glutamate 2730. The tract at residues 2730 to 2734 is interaction with host SCRIB; sequence EMYFS. Tyrosine 2732 serves as a coordination point for S-adenosyl-L-methionine. Glutamate 2950, histidine 2954, cysteine 2959, and cysteine 2962 together coordinate Zn(2+). One can recognise a RdRp catalytic domain in the interval 3040–3189; the sequence is GLFYADDTAG…RPVDDRFSKA (150 aa). Zn(2+) contacts are provided by histidine 3224, cysteine 3240, and cysteine 3359.

This sequence in the N-terminal section; belongs to the class I-like SAM-binding methyltransferase superfamily. mRNA cap 0-1 NS5-type methyltransferase family. As to quaternary structure, homodimer. Interacts (via N-terminus) with host EXOC1 (via C-terminus); this interaction results in EXOC1 degradation through the proteasome degradation pathway. Forms heterodimers with envelope protein E in the endoplasmic reticulum and Golgi. In terms of assembly, homodimer; in the endoplasmic reticulum and Golgi. Interacts with protein prM. Interacts with non-structural protein 1. As to quaternary structure, homodimer; Homohexamer when secreted. Interacts with envelope protein E. Interacts (via N-terminus) with serine protease NS3. In terms of assembly, forms a heterodimer with serine protease NS3. May form homooligomers. As to quaternary structure, forms a heterodimer with NS2B. Interacts with non-structural protein 2A (via N-terminus). Interacts with NS4B. Interacts with unphosphorylated RNA-directed RNA polymerase NS5; this interaction stimulates RNA-directed RNA polymerase NS5 guanylyltransferase activity. Interacts with serine protease NS3. Interacts with NS1. In terms of assembly, homodimer. Interacts with host STAT2; this interaction inhibits the phosphorylation of the latter, and, when all viral proteins are present (polyprotein), targets STAT2 for degradation. Interacts with serine protease NS3. Interacts with host SCRIB; this interaction targets NS5 to the cell membrane periphery and nucleus, thereby allowing efficient host nuclear STAT1 inhibition. Specific enzymatic cleavages in vivo yield mature proteins. Cleavages in the lumen of endoplasmic reticulum are performed by host signal peptidase, whereas cleavages in the cytoplasmic side are performed by serine protease NS3. Signal cleavage at the 2K-4B site requires a prior NS3 protease-mediated cleavage at the 4A-2K site. In terms of processing, cleaved in post-Golgi vesicles by a host furin, releasing the mature small envelope protein M, and peptide pr. This cleavage is incomplete as up to 30% of viral particles still carry uncleaved prM. Post-translationally, N-glycosylated. N-glycosylated. The excreted form is glycosylated and this is required for efficient secretion of the protein from infected cells. In terms of processing, acetylated by host KAT5. Acetylation modulates NS3 RNA-binding and unwinding activities and plays an important positive role for viral replication. Post-translationally, phosphorylated on serines residues. This phosphorylation may trigger NS5 nuclear localization.

It localises to the virion. The protein localises to the host nucleus. It is found in the host cytoplasm. The protein resides in the host perinuclear region. Its subcellular location is the secreted. It localises to the virion membrane. The protein localises to the host endoplasmic reticulum membrane. It catalyses the reaction Selective hydrolysis of -Xaa-Xaa-|-Yaa- bonds in which each of the Xaa can be either Arg or Lys and Yaa can be either Ser or Ala.. The catalysed reaction is RNA(n) + a ribonucleoside 5'-triphosphate = RNA(n+1) + diphosphate. It carries out the reaction a ribonucleoside 5'-triphosphate + H2O = a ribonucleoside 5'-diphosphate + phosphate + H(+). The enzyme catalyses ATP + H2O = ADP + phosphate + H(+). It catalyses the reaction a 5'-end (5'-triphosphoguanosine)-ribonucleoside in mRNA + S-adenosyl-L-methionine = a 5'-end (N(7)-methyl 5'-triphosphoguanosine)-ribonucleoside in mRNA + S-adenosyl-L-homocysteine. The catalysed reaction is a 5'-end (N(7)-methyl 5'-triphosphoguanosine)-ribonucleoside in mRNA + S-adenosyl-L-methionine = a 5'-end (N(7)-methyl 5'-triphosphoguanosine)-(2'-O-methyl-ribonucleoside) in mRNA + S-adenosyl-L-homocysteine + H(+). Its function is as follows. Plays a role in virus budding by binding to membrane and gathering the viral RNA into a nucleocapsid that forms the core of a mature virus particle. During virus entry, may induce genome penetration in host cytoplasm after hemifusion induced by surface proteins. Can migrate to the cell nucleus where it modulates host functions. Functionally, inhibits RNA silencing by interfering with host Dicer. Prevents premature fusion activity of envelope proteins in trans-Golgi by binding to envelope protein E at pH6.0. After virion release in extracellular space gets dissociated from E dimers. In terms of biological role, acts as a chaperone for envelope protein E during intracellular virion assembly by masking and inactivating envelope protein E fusion peptide. prM is the only viral peptide matured by host furin in the trans-Golgi network. Presumably to avoid catastrophic activation of the viral fusion activity in acidic GolGi compartment prior to virion release. prM-E cleavage is ineficient, and many virions are only partially matured. These uncleaved prM would play a role in immune evasion. Its function is as follows. May play a role in virus budding. Exerts cytotoxic effects by activating a mitochondrial apoptotic pathway through M extodomain. May display a viroporin activity. Functionally, binds to host cell surface receptor and mediates fusion between viral and cellular membranes. Envelope protein is synthesized in the endoplasmic reticulum in the form of heterodimer with protein prM. They play a role in virion budding in the ER, and the newly formed immature particle is covered with 60 spikes composed of heterodimer between precursor prM and envelope protein E. The virion is transported to the Golgi apparatus where the low pH causes dissociation of PrM-E heterodimers and formation of E homodimers. prM-E cleavage is ineficient, and many virions are only partially matured. These uncleaved prM would play a role in immune evasion. Involved in immune evasion, pathogenesis and viral replication. Once cleaved off the polyprotein, is targeted to three destinations: the viral replication cycle, the plasma membrane and the extracellular compartment. Essential for viral replication. Required for formation of the replication complex and recruitment of other non-structural proteins to the ER-derived membrane structures. Excreted as a hexameric lipoparticle that plays a role against host immune response. Antagonizing the complement function. Binds to the host macrophages and dendritic cells. Inhibits signal transduction originating from Toll-like receptor 3 (TLR3). In terms of biological role, component of the viral RNA replication complex that functions in virion assembly and antagonizes the host immune response. Its function is as follows. Required cofactor for the serine protease function of NS3. May have membrane-destabilizing activity and form viroporins. Functionally, displays three enzymatic activities: serine protease, NTPase and RNA helicase. NS3 serine protease, in association with NS2B, performs its autocleavage and cleaves the polyprotein at dibasic sites in the cytoplasm: C-prM, NS2A-NS2B, NS2B-NS3, NS3-NS4A, NS4A-2K and NS4B-NS5. NS3 RNA helicase binds RNA and unwinds dsRNA in the 3' to 5' direction. Regulates the ATPase activity of the NS3 helicase activity. NS4A allows NS3 helicase to conserve energy during unwinding. In terms of biological role, functions as a signal peptide for NS4B and is required for the interferon antagonism activity of the latter. Its function is as follows. Induces the formation of ER-derived membrane vesicles where the viral replication takes place. Inhibits interferon (IFN)-induced host STAT1 phosphorylation and nuclear translocation, thereby preventing the establishment of cellular antiviral state by blocking the IFN-alpha/beta pathway. Inhibits STAT2 translocation in the nucleus after IFN-alpha treatment. Functionally, replicates the viral (+) and (-) genome, and performs the capping of genomes in the cytoplasm. NS5 methylates viral RNA cap at guanine N-7 and ribose 2'-O positions. Besides its role in genome replication, also prevents the establishment of cellular antiviral state by blocking the interferon-alpha/beta (IFN-alpha/beta) signaling pathway. Inhibits host TYK2 and STAT2 phosphorylation, thereby preventing activation of JAK-STAT signaling pathway. This is Genome polyprotein from Homo sapiens (Human).